Reading from the N-terminus, the 544-residue chain is CTP synthase (544 aa).

The amidoligase domain stretch occupies residues Met-1–Ile-266. Ser-13 serves as a coordination point for CTP. Ser-13 lines the UTP pocket. ATP-binding positions include Ser-14–Ile-19 and Asp-71. Mg(2+) contacts are provided by Asp-71 and Glu-140. CTP is bound by residues Asp-147 to Glu-149, Lys-187 to Gln-192, and Lys-223. UTP contacts are provided by residues Lys-187 to Gln-192 and Lys-223. Arg-239–Val-241 is a binding site for ATP. A Glutamine amidotransferase type-1 domain is found at Thr-292–Leu-543. Gly-355 is a binding site for L-glutamine. Cys-382 serves as the catalytic Nucleophile; for glutamine hydrolysis. L-glutamine is bound by residues Tyr-383–Gln-386, Glu-406, and Arg-471. Active-site residues include His-516 and Glu-518.

The protein belongs to the CTP synthase family. Homotetramer.

It catalyses the reaction UTP + L-glutamine + ATP + H2O = CTP + L-glutamate + ADP + phosphate + 2 H(+). It carries out the reaction L-glutamine + H2O = L-glutamate + NH4(+). The catalysed reaction is UTP + NH4(+) + ATP = CTP + ADP + phosphate + 2 H(+). Its pathway is pyrimidine metabolism; CTP biosynthesis via de novo pathway; CTP from UDP: step 2/2. With respect to regulation, allosterically activated by GTP, when glutamine is the substrate; GTP has no effect on the reaction when ammonia is the substrate. The allosteric effector GTP functions by stabilizing the protein conformation that binds the tetrahedral intermediate(s) formed during glutamine hydrolysis. Inhibited by the product CTP, via allosteric rather than competitive inhibition. In terms of biological role, catalyzes the ATP-dependent amination of UTP to CTP with either L-glutamine or ammonia as the source of nitrogen. Regulates intracellular CTP levels through interactions with the four ribonucleotide triphosphates. The sequence is that of CTP synthase from Hyphomonas neptunium (strain ATCC 15444).